The sequence spans 377 residues: Metallo-hydrolase mfmC (377 aa).

The Zn(2+) site is built by His-126, His-128, Asp-130, His-131, His-209, and Asp-233.

This sequence belongs to the metallo-beta-lactamase superfamily.

It functions in the pathway secondary metabolite biosynthesis; terpenoid biosynthesis. Metallo-hydrolase; part of the gene cluster that mediates the biosynthesis of the phthalide-terpenoid hybrid 11'-O-desmethylfendlerol. Within the pathway, mfma and mfmC act together to convert 3,5-dimethylorsellinic acid (DMOA) into the phthalide 5,7-dihydroxy-4-(hydroxymethyl)-6-methylphthalide. The biosynthesis of 11'-O-desmethylfendlerol begins with the NR-PKS mfmB that forms 3,5-dimethylorsellinic acid (DMOA), which is then transformed into the phthalide 5,7-dihydroxy-4-(hydroxymethyl)-6-methylphthalide by the cytochrome P450 monooxygenase mfmA and the hydrolase mfmC. Subsequently, the methyltransferase mfmE catalyzes 7-O-methylation to yield 5-hydroxy-4-(hydroxymethyl)-7-methoxy-6-methylphthalide, which undergoes C-3 hydroxylation by the cytochrome P450 monooxygenase mfmF. The resultant cyclopolic acid (2,5-dihydroxy-4-(hydroxymethyl)-7-methoxy-6-methylphthalide) is then farnesylated by the DMATS-type prenyltransferase mfmD to afford 5-O-farnesylcyclopolic acid. Finally, the Pyr4-family terpene cyclase mfmH cyclizes the farnesyl moiety of 5-O-farnesylcyclopolic acid into a drimane-like structure, thus completing the biosynthesis of 11'-O-desmethylfendlerol. This Annulohypoxylon moriforme (Filamentous fungus) protein is Metallo-hydrolase mfmC.